Reading from the N-terminus, the 154-residue chain is Protein X (154 aa).

Residues P68 to F117 form a mitochondrial targeting sequence region.

The protein belongs to the orthohepadnavirus protein X family. In terms of assembly, may form homodimer. May interact with host CEBPA, CFLAR, CREB1, DDB1, E4F1, HBXIP, HSPD1/HSP60, NFKBIA, POLR2E and SMAD4. Interacts with host SMC5-SMC6 complex and induces its degradation. Interacts with host TRPC4AP; leading to prevent ubiquitination of TRPC4AP. Interacts with host PLSCR1; this interaction promotes ubiquitination and degradation of HBx and impairs HBx-mediated cell proliferation. In terms of processing, a fraction may be phosphorylated in insect cells and HepG2 cells, a human hepatoblastoma cell line. Phosphorylated in vitro by host protein kinase C or mitogen-activated protein kinase. N-acetylated in insect cells.

The protein resides in the host cytoplasm. Its subcellular location is the host nucleus. It localises to the host mitochondrion. Multifunctional protein that plays a role in silencing host antiviral defenses and promoting viral transcription. Does not seem to be essential for HBV infection. May be directly involved in development of cirrhosis and liver cancer (hepatocellular carcinoma). Most of cytosolic activities involve modulation of cytosolic calcium. The effect on apoptosis is controversial depending on the cell types in which the studies have been conducted. May induce apoptosis by localizing in mitochondria and causing loss of mitochondrial membrane potential. May also modulate apoptosis by binding host CFLAR, a key regulator of the death-inducing signaling complex (DISC). Promotes viral transcription by using the host E3 ubiquitin ligase DDB1 to target the SMC5-SMC6 complex to proteasomal degradation. This host complex would otherwise bind to viral episomal DNA, and prevents its transcription. Moderately stimulates transcription of many different viral and cellular transcription elements. Promoters and enhancers stimulated by HBx contain DNA binding sites for NF-kappa-B, AP-1, AP-2, c-EBP, ATF/CREB, or the calcium-activated factor NF-AT. This chain is Protein X, found in Hepatitis B virus genotype B2 (isolate Indonesia/pIDW420/1988) (HBV-B).